Consider the following 474-residue polypeptide: Gamma-aminobutyric acid receptor subunit beta-1 (474 aa).

Positions Met1 to Ala25 are cleaved as a signal peptide. The Extracellular portion of the chain corresponds to His26–Tyr245. 2 N-linked (GlcNAc...) asparagine glycosylation sites follow: Asn33 and Asn105. Residue Tyr122 participates in histamine binding. Cys161 and Cys175 form a disulfide bridge. Asn174 carries N-linked (GlcNAc...) asparagine glycosylation. Residues Ser181–Tyr182 and Thr227 contribute to the histamine site. Positions 182 and 227 each coordinate 4-aminobutanoate. Helical transmembrane passes span Phe246–Ile267, Ala271–Leu293, and Ala305–Val327. Over Asn328–Lys451 the chain is Cytoplasmic. A helical membrane pass occupies residues Trp452–Val473.

It belongs to the ligand-gated ion channel (TC 1.A.9) family. Gamma-aminobutyric acid receptor (TC 1.A.9.5) subfamily. GABRB1 sub-subfamily. In terms of assembly, heteropentamer, formed by a combination of alpha (GABRA1-6), beta (GABRB1-3), gamma (GABRG1-3), delta (GABRD), epsilon (GABRE), rho (GABRR1-3), pi (GABRP) and theta (GABRQ) chains, each subunit exhibiting distinct physiological and pharmacological properties. Binds UBQLN1.

The protein resides in the postsynaptic cell membrane. The protein localises to the cell membrane. It catalyses the reaction chloride(in) = chloride(out). Its activity is regulated as follows. Potentiated by histamine. Beta subunit of the heteropentameric ligand-gated chloride channel gated by gamma-aminobutyric acid (GABA), a major inhibitory neurotransmitter in the brain. GABA-gated chloride channels, also named GABA(A) receptors (GABAAR), consist of five subunits arranged around a central pore and contain GABA active binding site(s) located at the alpha and beta subunit interface(s). When activated by GABA, GABAARs selectively allow the flow of chloride anions across the cell membrane down their electrochemical gradient. Chloride influx into the postsynaptic neuron following GABAAR opening decreases the neuron ability to generate a new action potential, thereby reducing nerve transmission. Beta-containing GABAARs can simultaneously bind GABA and histamine where histamine binds at the interface of two neighboring beta subunits, which may be involved in the regulation of sleep and wakefulness. This Mus musculus (Mouse) protein is Gamma-aminobutyric acid receptor subunit beta-1.